Here is a 434-residue protein sequence, read N- to C-terminus: Methylenetetrahydrofolate--tRNA-(uracil-5-)-methyltransferase TrmFO (434 aa).

10-15 lines the FAD pocket; that stretch reads GAGLAG.

It belongs to the MnmG family. TrmFO subfamily. FAD serves as cofactor.

Its subcellular location is the cytoplasm. It catalyses the reaction uridine(54) in tRNA + (6R)-5,10-methylene-5,6,7,8-tetrahydrofolate + NADH + H(+) = 5-methyluridine(54) in tRNA + (6S)-5,6,7,8-tetrahydrofolate + NAD(+). The enzyme catalyses uridine(54) in tRNA + (6R)-5,10-methylene-5,6,7,8-tetrahydrofolate + NADPH + H(+) = 5-methyluridine(54) in tRNA + (6S)-5,6,7,8-tetrahydrofolate + NADP(+). In terms of biological role, catalyzes the folate-dependent formation of 5-methyl-uridine at position 54 (M-5-U54) in all tRNAs. In Bacillus cereus (strain ATCC 10987 / NRS 248), this protein is Methylenetetrahydrofolate--tRNA-(uracil-5-)-methyltransferase TrmFO.